Consider the following 426-residue polypeptide: Serine--tRNA ligase (426 aa).

Residue 233–235 (TAE) coordinates L-serine. 264-266 (RSE) contacts ATP. Glu-287 contributes to the L-serine binding site. 351–354 (EISS) lines the ATP pocket. Ser-387 provides a ligand contact to L-serine.

Belongs to the class-II aminoacyl-tRNA synthetase family. Type-1 seryl-tRNA synthetase subfamily. As to quaternary structure, homodimer. The tRNA molecule binds across the dimer.

It is found in the cytoplasm. It catalyses the reaction tRNA(Ser) + L-serine + ATP = L-seryl-tRNA(Ser) + AMP + diphosphate + H(+). It carries out the reaction tRNA(Sec) + L-serine + ATP = L-seryl-tRNA(Sec) + AMP + diphosphate + H(+). The protein operates within aminoacyl-tRNA biosynthesis; selenocysteinyl-tRNA(Sec) biosynthesis; L-seryl-tRNA(Sec) from L-serine and tRNA(Sec): step 1/1. Its function is as follows. Catalyzes the attachment of serine to tRNA(Ser). Is also able to aminoacylate tRNA(Sec) with serine, to form the misacylated tRNA L-seryl-tRNA(Sec), which will be further converted into selenocysteinyl-tRNA(Sec). The protein is Serine--tRNA ligase of Clostridium botulinum (strain 657 / Type Ba4).